A 267-amino-acid polypeptide reads, in one-letter code: Type III pantothenate kinase (267 aa).

6 to 13 (DSGNSRLK) serves as a coordination point for ATP. Substrate-binding positions include tyrosine 96 and 103–106 (GADR). The active-site Proton acceptor is the aspartate 105. Threonine 131 is an ATP binding site. Substrate is bound at residue threonine 181.

The protein belongs to the type III pantothenate kinase family. Homodimer. It depends on NH4(+) as a cofactor. K(+) serves as cofactor.

Its subcellular location is the cytoplasm. The catalysed reaction is (R)-pantothenate + ATP = (R)-4'-phosphopantothenate + ADP + H(+). It participates in cofactor biosynthesis; coenzyme A biosynthesis; CoA from (R)-pantothenate: step 1/5. In terms of biological role, catalyzes the phosphorylation of pantothenate (Pan), the first step in CoA biosynthesis. Its function is as follows. Activates transcription of the pertussis toxin operon in a BvgAS-dependent manner. May interact with the alpha subunit of RNA polymerase. This Bordetella pertussis (strain Tohama I / ATCC BAA-589 / NCTC 13251) protein is Type III pantothenate kinase (coaX).